A 336-amino-acid chain; its full sequence is Tetraacyldisaccharide 4'-kinase (336 aa).

ATP is bound at residue 60–67; the sequence is TVGGTGKT.

Belongs to the LpxK family.

It catalyses the reaction a lipid A disaccharide + ATP = a lipid IVA + ADP + H(+). The protein operates within glycolipid biosynthesis; lipid IV(A) biosynthesis; lipid IV(A) from (3R)-3-hydroxytetradecanoyl-[acyl-carrier-protein] and UDP-N-acetyl-alpha-D-glucosamine: step 6/6. Transfers the gamma-phosphate of ATP to the 4'-position of a tetraacyldisaccharide 1-phosphate intermediate (termed DS-1-P) to form tetraacyldisaccharide 1,4'-bis-phosphate (lipid IVA). The chain is Tetraacyldisaccharide 4'-kinase from Pseudomonas fluorescens (strain ATCC BAA-477 / NRRL B-23932 / Pf-5).